The sequence spans 254 residues: D-aminoacyl-tRNA deacylase (254 aa).

The protein belongs to the DtdA deacylase family. As to quaternary structure, monomer. Zn(2+) is required as a cofactor.

The enzyme catalyses a D-aminoacyl-tRNA + H2O = a tRNA + a D-alpha-amino acid + H(+). It catalyses the reaction glycyl-tRNA(Ala) + H2O = tRNA(Ala) + glycine + H(+). Functionally, D-aminoacyl-tRNA deacylase with broad substrate specificity. By recycling D-aminoacyl-tRNA to D-amino acids and free tRNA molecules, this enzyme counteracts the toxicity associated with the formation of D-aminoacyl-tRNA entities in vivo. In Methanococcus vannielii (strain ATCC 35089 / DSM 1224 / JCM 13029 / OCM 148 / SB), this protein is D-aminoacyl-tRNA deacylase.